Here is a 184-residue protein sequence, read N- to C-terminus: Sec-independent protein translocase protein TatB (184 aa).

Residues 1 to 21 form a helical membrane-spanning segment; that stretch reads MFDIGFSELVLLFVVGLIVLG. Residues 149–168 are compositionally biased toward acidic residues; sequence AEEGEPMLEMGESDFSEDEQ. The disordered stretch occupies residues 149 to 184; sequence AEEGEPMLEMGESDFSEDEQATASSNETIENIKEKV.

The protein belongs to the TatB family. As to quaternary structure, the Tat system comprises two distinct complexes: a TatABC complex, containing multiple copies of TatA, TatB and TatC subunits, and a separate TatA complex, containing only TatA subunits. Substrates initially bind to the TatABC complex, which probably triggers association of the separate TatA complex to form the active translocon.

It is found in the cell inner membrane. Part of the twin-arginine translocation (Tat) system that transports large folded proteins containing a characteristic twin-arginine motif in their signal peptide across membranes. Together with TatC, TatB is part of a receptor directly interacting with Tat signal peptides. TatB may form an oligomeric binding site that transiently accommodates folded Tat precursor proteins before their translocation. The chain is Sec-independent protein translocase protein TatB from Histophilus somni (strain 129Pt) (Haemophilus somnus).